Consider the following 292-residue polypeptide: Shikimate dehydrogenase (NADP(+)) (292 aa).

Residues 25–27 (SKS) and Thr72 contribute to the shikimate site. Catalysis depends on Lys76, which acts as the Proton acceptor. The shikimate site is built by Asn97 and Asp113. NADP(+) contacts are provided by residues 137–141 (GAGGA), 161–166 (NRTQSK), and Met230. Tyr232 is a binding site for shikimate. Gly254 provides a ligand contact to NADP(+).

Belongs to the shikimate dehydrogenase family. Homodimer.

It catalyses the reaction shikimate + NADP(+) = 3-dehydroshikimate + NADPH + H(+). The protein operates within metabolic intermediate biosynthesis; chorismate biosynthesis; chorismate from D-erythrose 4-phosphate and phosphoenolpyruvate: step 4/7. Functionally, involved in the biosynthesis of the chorismate, which leads to the biosynthesis of aromatic amino acids. Catalyzes the reversible NADPH linked reduction of 3-dehydroshikimate (DHSA) to yield shikimate (SA). This is Shikimate dehydrogenase (NADP(+)) from Shewanella sp. (strain MR-4).